Reading from the N-terminus, the 244-residue chain is Carbonyl reductase [NADPH] 2 (244 aa).

Residue 11-39 participates in NADP(+) binding; that stretch reads LVTGAGKGIGRDTVKALHVSGARVVAVTR. Residue Ser136 participates in substrate binding. Tyr149 functions as the Proton acceptor in the catalytic mechanism. Ser176 is subject to Phosphoserine.

It belongs to the short-chain dehydrogenases/reductases (SDR) family. Homotetramer. As to expression, lung (ciliated cells, non-ciliated bronchiolar cells and type-II alveolar pneumocytes). Low expression in all extrapulmonary tissues, including adipose tissue.

It is found in the mitochondrion matrix. It carries out the reaction a secondary alcohol + NADP(+) = a ketone + NADPH + H(+). Its activity is regulated as follows. Allosteric enzyme exhibiting negative cooperativity. Activated 2-5 fold by fatty acids. May function in the pulmonary metabolism of endogenous carbonyl compounds, such as aliphatic aldehydes and ketones derived from lipid peroxidation, 3-ketosteroids and fatty aldehydes, as well as in xenobiotic metabolism. The sequence is that of Carbonyl reductase [NADPH] 2 (CBR2) from Sus scrofa (Pig).